The following is a 401-amino-acid chain: 8-amino-7-oxononanoate synthase (401 aa).

Residue R19 participates in substrate binding. 106–107 (GY) is a pyridoxal 5'-phosphate binding site. A substrate-binding site is contributed by H131. Pyridoxal 5'-phosphate is bound by residues S176, H204, and T233. K236 carries the N6-(pyridoxal phosphate)lysine modification. Residue T350 coordinates substrate.

This sequence belongs to the class-II pyridoxal-phosphate-dependent aminotransferase family. BioF subfamily. As to quaternary structure, homodimer. It depends on pyridoxal 5'-phosphate as a cofactor.

The enzyme catalyses 6-carboxyhexanoyl-[ACP] + L-alanine + H(+) = (8S)-8-amino-7-oxononanoate + holo-[ACP] + CO2. The protein operates within cofactor biosynthesis; biotin biosynthesis. Functionally, catalyzes the decarboxylative condensation of pimeloyl-[acyl-carrier protein] and L-alanine to produce 8-amino-7-oxononanoate (AON), [acyl-carrier protein], and carbon dioxide. This is 8-amino-7-oxononanoate synthase from Pseudomonas paraeruginosa (strain DSM 24068 / PA7) (Pseudomonas aeruginosa (strain PA7)).